We begin with the raw amino-acid sequence, 101 residues long: Protein RADIALIS-like 2 (101 aa).

In terms of domain architecture, SANT spans 9 to 64 (YGSGSWTVKQNKAFERALAVYDQDTPDRWHNVARAVGGKTPEEAKRQYDLLVRDIE). Residues 69–101 (GHVPFPDYKTTTGNSNRGRLRDEEKRMRSMKLQ) form a disordered region.

Expressed in the funiculus of ovules and in embryos. In young ovules, expression is observed in the adaxial side of the funiculus (the stalk connecting the embryo sac to the placenta). Also expressed in heart-stage embryos, in the cortex and endodermis of the hypocotyl region but not in the cotyledons, shoot and root apical meristems, provasculature or epidermis. Not detected in young seedlings, mature roots or in young floral primordia.

Its subcellular location is the nucleus. Its function is as follows. Probable transcription factor. Required for female gametophyte development. The protein is Protein RADIALIS-like 2 (RL2) of Arabidopsis thaliana (Mouse-ear cress).